The following is a 152-amino-acid chain: Ribosome maturation factor RimP (152 aa).

This sequence belongs to the RimP family.

The protein localises to the cytoplasm. In terms of biological role, required for maturation of 30S ribosomal subunits. The chain is Ribosome maturation factor RimP from Escherichia coli (strain K12 / MC4100 / BW2952).